The following is a 139-amino-acid chain: D-ribose pyranase (139 aa).

Residue His-20 is the Proton donor of the active site. Residues Asp-28, His-106, and 128–130 each bind substrate; that span reads YAN.

This sequence belongs to the RbsD / FucU family. RbsD subfamily. As to quaternary structure, homodecamer.

The protein localises to the cytoplasm. It catalyses the reaction beta-D-ribopyranose = beta-D-ribofuranose. It functions in the pathway carbohydrate metabolism; D-ribose degradation; D-ribose 5-phosphate from beta-D-ribopyranose: step 1/2. Its function is as follows. Catalyzes the interconversion of beta-pyran and beta-furan forms of D-ribose. In Salmonella agona (strain SL483), this protein is D-ribose pyranase.